Consider the following 219-residue polypeptide: Envelope protein UL45 homolog (219 aa).

Residues 1–57 are Intravirion-facing; it reads MEDYKLLQLETATVDAQAPPLPTKTVPVFAPPLSTPPQPNELVYTKRRRTKRKAKCR. The chain crosses the membrane as a helical; Signal-anchor for type II membrane protein span at residues 58–78; the sequence is CLFFTMGMFALGVLMTTAILV. Over 79-219 the chain is Virion surface; it reads STFILTVPIG…RLDHIIPFPR (141 aa). N-linked (GlcNAc...) asparagine; by host glycosylation is found at Asn-113, Asn-120, and Asn-138.

It belongs to the herpesviridae HHV-1 UL45 family. Post-translationally, N-glycosylated.

Its subcellular location is the virion membrane. This Equine herpesvirus 1 (strain Ab4p) (EHV-1) protein is Envelope protein UL45 homolog.